Consider the following 393-residue polypeptide: DNA primase small subunit PriS (393 aa).

Catalysis depends on residues Asp-100, Asp-102, and Asp-296.

The protein belongs to the eukaryotic-type primase small subunit family. Heterodimer of a small subunit (PriS) and a large subunit (PriL). The cofactor is Mg(2+). It depends on Mn(2+) as a cofactor.

Functionally, catalytic subunit of DNA primase, an RNA polymerase that catalyzes the synthesis of short RNA molecules used as primers for DNA polymerase during DNA replication. The small subunit contains the primase catalytic core and has DNA synthesis activity on its own. Binding to the large subunit stabilizes and modulates the activity, increasing the rate of DNA synthesis while decreasing the length of the DNA fragments, and conferring RNA synthesis capability. The DNA polymerase activity may enable DNA primase to also catalyze primer extension after primer synthesis. May also play a role in DNA repair. This is DNA primase small subunit PriS from Natronomonas pharaonis (strain ATCC 35678 / DSM 2160 / CIP 103997 / JCM 8858 / NBRC 14720 / NCIMB 2260 / Gabara) (Halobacterium pharaonis).